The sequence spans 216 residues: MKIKEFMSNKKGASGIGTLIVFIAMVLVAAVAASVLINTSGFLQQKASTTGKESTEQVASGLQISQVMGMHNNSNINKTAIYISPNAGSSAIDLSQAVIMLSDGSNKRVYKYNESSYKDLTNGGDIFDNANVEWIKATATKFGIVVIQDADESCTAANPVINKGDLVAITLNTTSFSTTPRTSITGTVQPEFGAPGIISFTTPATYLNDSKVVQLQ.

Positions 1-12 (MKIKEFMSNKKG) are excised as a propeptide. N-linked (GlcNAc...) asparagine glycosylation is found at asparagine 38, asparagine 72, asparagine 77, asparagine 113, asparagine 172, and asparagine 208.

This sequence belongs to the archaeal flagellin family. In terms of processing, N-linked glycans consist of the 779 Da trisaccharide beta-ManNAc(Thr)-(1-4)-beta-GlcNAc3NAcA-(1-3)-beta-GlcNAc.

Its subcellular location is the archaeal flagellum. Functionally, flagellin is the subunit protein which polymerizes to form the filaments of archaeal flagella. This chain is Flagellin B2 (flaB2), found in Methanococcus voltae.